The chain runs to 418 residues: Serine hydroxymethyltransferase (418 aa).

Residues L121 and 125–127 (GHL) each bind (6S)-5,6,7,8-tetrahydrofolate. Residue K230 is modified to N6-(pyridoxal phosphate)lysine. Residues E246 and 355–357 (SPF) contribute to the (6S)-5,6,7,8-tetrahydrofolate site.

Belongs to the SHMT family. In terms of assembly, homodimer. It depends on pyridoxal 5'-phosphate as a cofactor.

Its subcellular location is the cytoplasm. The enzyme catalyses (6R)-5,10-methylene-5,6,7,8-tetrahydrofolate + glycine + H2O = (6S)-5,6,7,8-tetrahydrofolate + L-serine. The protein operates within one-carbon metabolism; tetrahydrofolate interconversion. Its pathway is amino-acid biosynthesis; glycine biosynthesis; glycine from L-serine: step 1/1. Catalyzes the reversible interconversion of serine and glycine with tetrahydrofolate (THF) serving as the one-carbon carrier. This reaction serves as the major source of one-carbon groups required for the biosynthesis of purines, thymidylate, methionine, and other important biomolecules. Also exhibits THF-independent aldolase activity toward beta-hydroxyamino acids, producing glycine and aldehydes, via a retro-aldol mechanism. The chain is Serine hydroxymethyltransferase from Streptococcus pneumoniae (strain 70585).